The sequence spans 215 residues: Cytochrome b6 (215 aa).

The helical transmembrane segment at 32–52 (IFYCLGGITLTCFLVQVATGF) threads the bilayer. Cys-35 contributes to the heme c binding site. Residues His-86 and His-100 each coordinate heme b. Helical transmembrane passes span 90–110 (ASMMVLMMILHIFRVYLTGGF), 116–136 (LTWVTGVILAVLTVSFGVTGY), and 186–206 (LHTFVLPLLTAIFMLMHFLMI). Residues His-187 and His-202 each coordinate heme b.

Belongs to the cytochrome b family. PetB subfamily. The 4 large subunits of the cytochrome b6-f complex are cytochrome b6, subunit IV (17 kDa polypeptide, PetD), cytochrome f and the Rieske protein, while the 4 small subunits are PetG, PetL, PetM and PetN. The complex functions as a dimer. It depends on heme b as a cofactor. Heme c serves as cofactor.

Its subcellular location is the plastid. The protein resides in the chloroplast thylakoid membrane. In terms of biological role, component of the cytochrome b6-f complex, which mediates electron transfer between photosystem II (PSII) and photosystem I (PSI), cyclic electron flow around PSI, and state transitions. This Marchantia polymorpha (Common liverwort) protein is Cytochrome b6.